The following is a 93-amino-acid chain: Acylphosphatase (93 aa).

Positions 6–92 (RAHVWVGGKV…EGLTHFEVLR (87 aa)) constitute an Acylphosphatase-like domain. Active-site residues include Arg21 and Asn39.

It belongs to the acylphosphatase family.

The catalysed reaction is an acyl phosphate + H2O = a carboxylate + phosphate + H(+). The sequence is that of Acylphosphatase (acyP) from Gloeobacter violaceus (strain ATCC 29082 / PCC 7421).